The following is a 215-amino-acid chain: Nascent polypeptide-associated complex subunit alpha (215 aa).

A disordered region spans residues 1–81 (MPGEATETVP…SEKKARKAMS (81 aa)). The segment covering 9–28 (VPATEQELPQPQAETGSGTE) has biased composition (polar residues). Positions 29-42 (SDSDESVPELEEQD) are enriched in acidic residues. S43 carries the post-translational modification Phosphoserine; by ILK1. The segment covering 44–57 (TQATTQQAQLAAAA) has biased composition (low complexity). The interval 69-80 (QSRSEKKARKAM) is required for DNA-binding. Residues 70 to 135 (SRSEKKARKA…AKIEDLSQQA (66 aa)) form the NAC-A/B domain. The tract at residues 93-108 (RVTIRKSKNILFVITK) is RNA/DNA-binding. Residue S132 is modified to Phosphoserine. K142 carries the post-translational modification N6-acetyllysine; alternate. Residue K142 forms a Glycyl lysine isopeptide (Lys-Gly) (interchain with G-Cter in SUMO2); alternate linkage. The residue at position 159 (T159) is a Phosphothreonine; by GSK3-beta. Phosphothreonine is present on T161. S166, S186, S191, and S203 each carry phosphoserine. In terms of domain architecture, UBA spans 176 to 213 (VEVKDIELVMSQANVSRAKAVRALKNNSNDIVNAIMEL).

It belongs to the NAC-alpha family. As to quaternary structure, part of the nascent polypeptide-associated complex (NAC), which is a heterodimer of NACA and BTF3 (via NAC-A/B domains). NAC associates with ribosomes through the BTF3/NACB subunit and contacts the ribosomal protein L23, which is positioned near the exiting site. Both subunits can contact nascent polypeptide chains. NACA may also form homodimers, and only this form binds DNA. Interacts with TBP and JUN. In terms of processing, phosphorylation of Ser-43 by ILK during cell adhesion may promote nuclear localization. Phosphorylation of Thr-159 by GSK3B may promote proteasome mediated degradation.

Its subcellular location is the cytoplasm. The protein localises to the nucleus. Its function is as follows. Prevents inappropriate targeting of non-secretory polypeptides to the endoplasmic reticulum (ER). Binds to nascent polypeptide chains as they emerge from the ribosome and blocks their interaction with the signal recognition particle (SRP), which normally targets nascent secretory peptides to the ER. Also reduces the inherent affinity of ribosomes for protein translocation sites in the ER membrane (M sites). May act as a specific coactivator for JUN, binding to DNA and stabilizing the interaction of JUN homodimers with target gene promoters. The protein is Nascent polypeptide-associated complex subunit alpha (NACA) of Pongo abelii (Sumatran orangutan).